A 264-amino-acid chain; its full sequence is CD320 antigen (264 aa).

Positions 1-28 (MARCGAGRAAALGLVLRLLLGLRTGPEA) are cleaved as a signal peptide. One can recognise an LDL-receptor class A 1 domain in the interval 50-87 (SCPTDTFKCLTSGYCVPLSWRCDGDRDCSDGSDEEECR). Disulfide bonds link cysteine 51–cysteine 64, cysteine 58–cysteine 77, and cysteine 71–cysteine 86. Ca(2+) is bound by residues tryptophan 69, aspartate 72, aspartate 74, aspartate 76, aspartate 82, and glutamate 83. A glycan (N-linked (GlcNAc...) asparagine) is linked at asparagine 122. An LDL-receptor class A 2 domain is found at 127 to 164 (PCQEGELRCILDDVCIPHTWRCDGHPDCPDSSDELSCD). Cystine bridges form between cysteine 128–cysteine 141, cysteine 135–cysteine 154, and cysteine 148–cysteine 163. Residues tryptophan 146, aspartate 149, histidine 151, aspartate 153, aspartate 159, and glutamate 160 each contribute to the Ca(2+) site. The N-linked (GlcNAc...) asparagine glycan is linked to asparagine 195. A helical membrane pass occupies residues 213-233 (VIAAAGVLSAILVSATILILL).

Interacts (via LDL-receptor class A domains) with TCN2.

The protein localises to the cell membrane. Its function is as follows. Receptor for transcobalamin saturated with cobalamin (TCbl). Plays an important role in cobalamin uptake. Plasma membrane protein that is expressed on follicular dendritic cells (FDC) and mediates interaction with germinal center B cells. Functions as a costimulator to promote B cell responses to antigenic stimuli; promotes B cell differentiation and proliferation. Germinal center-B (GC-B) cells differentiate into memory B-cells and plasma cells (PC) through interaction with T-cells and follicular dendritic cells (FDC). CD320 augments the proliferation of PC precursors generated by IL-10. This Rattus norvegicus (Rat) protein is CD320 antigen (Cd320).